Consider the following 355-residue polypeptide: Uroporphyrinogen decarboxylase (355 aa).

Substrate-binding positions include 27–31, Phe46, Asp77, Tyr154, Ser209, and His327; that span reads RQAGR.

The protein belongs to the uroporphyrinogen decarboxylase family. Homodimer.

Its subcellular location is the cytoplasm. The enzyme catalyses uroporphyrinogen III + 4 H(+) = coproporphyrinogen III + 4 CO2. Its pathway is porphyrin-containing compound metabolism; protoporphyrin-IX biosynthesis; coproporphyrinogen-III from 5-aminolevulinate: step 4/4. In terms of biological role, catalyzes the decarboxylation of four acetate groups of uroporphyrinogen-III to yield coproporphyrinogen-III. This chain is Uroporphyrinogen decarboxylase, found in Nitrosomonas europaea (strain ATCC 19718 / CIP 103999 / KCTC 2705 / NBRC 14298).